A 201-amino-acid chain; its full sequence is Recombination protein RecR (201 aa).

The C4-type zinc finger occupies 60–75; that stretch reads CSRCGNVDTVDPCIVC. Residues 83–178 enclose the Toprim domain; sequence SVIIVVEDVS…KITRLAHGVP (96 aa).

The protein belongs to the RecR family.

May play a role in DNA repair. It seems to be involved in an RecBC-independent recombinational process of DNA repair. It may act with RecF and RecO. This chain is Recombination protein RecR, found in Rhizobium johnstonii (strain DSM 114642 / LMG 32736 / 3841) (Rhizobium leguminosarum bv. viciae).